Consider the following 231-residue polypeptide: Cytidylate kinase (231 aa).

17–25 contacts ATP; sequence GPTASGKGT.

The protein belongs to the cytidylate kinase family. Type 1 subfamily.

Its subcellular location is the cytoplasm. It carries out the reaction CMP + ATP = CDP + ADP. It catalyses the reaction dCMP + ATP = dCDP + ADP. This is Cytidylate kinase from Ralstonia pickettii (strain 12J).